Here is a 320-residue protein sequence, read N- to C-terminus: Mitochondrial fission regulator 1-like-B (320 aa).

Residues 1 to 37 (MASLGAAAEPERSLFGKDGAEACESPEGRRSGRRKRT) are disordered. The span at 9–30 (EPERSLFGKDGAEACESPEGRR) shows a compositional bias: basic and acidic residues.

This sequence belongs to the MTFR1 family.

The protein localises to the mitochondrion outer membrane. In terms of biological role, mitochondrial protein required for adaptation of miochondrial dynamics to metabolic changes. Regulates mitochondrial morphology at steady state and mediates AMPK-dependent stress-induced mitochondrial fragmentation via the control of OPA1 levels. The chain is Mitochondrial fission regulator 1-like-B (mtfr1l-b) from Xenopus laevis (African clawed frog).